We begin with the raw amino-acid sequence, 136 residues long: Urease subunit beta (136 aa).

The interval 113 to 136 (NDEYAGVFGDNGAENVNKKGGKRS) is disordered.

Belongs to the urease beta subunit family. Heterotrimer of UreA (gamma), UreB (beta) and UreC (alpha) subunits. Three heterotrimers associate to form the active enzyme.

It is found in the cytoplasm. It carries out the reaction urea + 2 H2O + H(+) = hydrogencarbonate + 2 NH4(+). The protein operates within nitrogen metabolism; urea degradation; CO(2) and NH(3) from urea (urease route): step 1/1. The protein is Urease subunit beta of Staphylococcus aureus (strain USA300).